The sequence spans 362 residues: Chromobox protein homolog 8 (362 aa).

In terms of domain architecture, Chromo spans 11–69 (FAAEALLKRRIRKGRMEYLVKWKGWSQKYSTWEPEENILDARLLAAFEEREREMELYGP). The span at 90 to 100 (KTYEFRSDSTR) shows a compositional bias: basic and acidic residues. The interval 90-197 (KTYEFRSDST…LGEPSAGLGE (108 aa)) is disordered. Position 110 is a phosphoserine (Ser110). Over residues 142–162 (DPPRDRDRERDRGTSRVDDKP) the composition is skewed to basic and acidic residues. 2 positions are modified to phosphoserine: Ser164 and Ser229. Tyr234 carries the phosphotyrosine modification. Ser238, Ser284, Ser305, and Ser325 each carry phosphoserine.

As to quaternary structure, component of a PRC1-like complex. Interacts with RING1, RNF2, PCGF1, PCGF2, PCGF3, BMI1, PCGF5, PCGF6 and PHC2. Interacts with histone H3. Interacts with MLLT3. Interacts with PHC2. Interacts (via chromodomain) with single-stranded RNA.

The protein resides in the nucleus. It localises to the chromosome. Component of a Polycomb group (PcG) multiprotein PRC1-like complex, a complex class required to maintain the transcriptionally repressive state of many genes, including Hox genes, throughout development. PcG PRC1 complex acts via chromatin remodeling and modification of histones; it mediates monoubiquitination of histone H2A 'Lys-119', rendering chromatin heritably changed in its expressibility. The polypeptide is Chromobox protein homolog 8 (Cbx8) (Mus musculus (Mouse)).